Here is a 403-residue protein sequence, read N- to C-terminus: F-box/kelch-repeat protein At5g43190 (403 aa).

The region spanning 45–91 (PNIWSNLPNHLLEHILSLLPFKTLLTLRSISRHLRSLILSPSFISDH) is the F-box domain. Kelch repeat units lie at residues 91–140 (HSFS…LLSS), 192–240 (KIFT…VFYN), 291–339 (ILYM…VCYH), and 343–393 (HVYC…FRWF).

The chain is F-box/kelch-repeat protein At5g43190 from Arabidopsis thaliana (Mouse-ear cress).